A 242-amino-acid chain; its full sequence is Glutamate transport ATP-binding protein GluA (242 aa).

The ABC transporter domain maps to 2–236 (IKMTGVQKYF…PKSDRAKDFL (235 aa)). 34 to 41 (GPSGSGKS) is a binding site for ATP.

Belongs to the ABC transporter superfamily. As to quaternary structure, the complex is composed of two ATP-binding proteins (GluA), two transmembrane proteins (GluC and GluD) and a solute-binding protein (GluB).

The protein localises to the cell membrane. The catalysed reaction is a polar amino acid(out) + ATP + H2O = a polar amino acid(in) + ADP + phosphate + H(+). It carries out the reaction L-glutamate(out) + ATP + H2O = L-glutamate(in) + ADP + phosphate + H(+). Its function is as follows. Part of the ABC transporter complex GluABCD involved in glutamate uptake. Probably responsible for energy coupling to the transport system. In Corynebacterium glutamicum (strain ATCC 13032 / DSM 20300 / JCM 1318 / BCRC 11384 / CCUG 27702 / LMG 3730 / NBRC 12168 / NCIMB 10025 / NRRL B-2784 / 534), this protein is Glutamate transport ATP-binding protein GluA.